The following is a 413-amino-acid chain: Serine/threonine-protein kinase ppk27 (413 aa).

Positions 102 to 403 constitute a Protein kinase domain; that stretch reads WSINTKITST…LKDFNKHGNF (302 aa). Residues 108–116 and lysine 133 contribute to the ATP site; that span reads ITSTEQREV. The active-site Proton acceptor is the aspartate 231.

The protein belongs to the protein kinase superfamily. Ser/Thr protein kinase family.

It localises to the cytoplasm. It catalyses the reaction L-seryl-[protein] + ATP = O-phospho-L-seryl-[protein] + ADP + H(+). The enzyme catalyses L-threonyl-[protein] + ATP = O-phospho-L-threonyl-[protein] + ADP + H(+). The protein is Serine/threonine-protein kinase ppk27 (ppk27) of Schizosaccharomyces pombe (strain 972 / ATCC 24843) (Fission yeast).